The following is a 334-amino-acid chain: 6-phosphogluconolactonase (334 aa).

Belongs to the cycloisomerase 2 family.

It carries out the reaction 6-phospho-D-glucono-1,5-lactone + H2O = 6-phospho-D-gluconate + H(+). Its pathway is carbohydrate degradation; pentose phosphate pathway; D-ribulose 5-phosphate from D-glucose 6-phosphate (oxidative stage): step 2/3. Its function is as follows. Catalyzes the hydrolysis of 6-phosphogluconolactone to 6-phosphogluconate. This chain is 6-phosphogluconolactonase, found in Buchnera aphidicola subsp. Acyrthosiphon pisum (strain 5A).